Here is a 121-residue protein sequence, read N- to C-terminus: Small ribosomal subunit protein uS13 (121 aa).

A disordered region spans residues 91–121; it reads HRRGLPVRGQNTKNNARTRKGPSKTVAGKKK. The span at 106–121 shows a compositional bias: basic residues; the sequence is ARTRKGPSKTVAGKKK.

The protein belongs to the universal ribosomal protein uS13 family. Part of the 30S ribosomal subunit. Forms a loose heterodimer with protein S19. Forms two bridges to the 50S subunit in the 70S ribosome.

In terms of biological role, located at the top of the head of the 30S subunit, it contacts several helices of the 16S rRNA. In the 70S ribosome it contacts the 23S rRNA (bridge B1a) and protein L5 of the 50S subunit (bridge B1b), connecting the 2 subunits; these bridges are implicated in subunit movement. Contacts the tRNAs in the A and P-sites. The protein is Small ribosomal subunit protein uS13 of Listeria welshimeri serovar 6b (strain ATCC 35897 / DSM 20650 / CCUG 15529 / CIP 8149 / NCTC 11857 / SLCC 5334 / V8).